Consider the following 136-residue polypeptide: Protein PsiE (136 aa).

The next 4 helical transmembrane spans lie at 15–35 (ILQN…VVFL), 55–75 (YELV…ALIV), 83–103 (HFPL…LIIV), and 108–128 (PMDV…LWLC).

The protein belongs to the PsiE family.

The protein resides in the cell inner membrane. This chain is Protein PsiE, found in Salmonella gallinarum (strain 287/91 / NCTC 13346).